A 262-amino-acid polypeptide reads, in one-letter code: Acyl-[acyl-carrier-protein]--UDP-N-acetylglucosamine O-acyltransferase (262 aa).

This sequence belongs to the transferase hexapeptide repeat family. LpxA subfamily. As to quaternary structure, homotrimer.

Its subcellular location is the cytoplasm. The catalysed reaction is a (3R)-hydroxyacyl-[ACP] + UDP-N-acetyl-alpha-D-glucosamine = a UDP-3-O-[(3R)-3-hydroxyacyl]-N-acetyl-alpha-D-glucosamine + holo-[ACP]. It functions in the pathway glycolipid biosynthesis; lipid IV(A) biosynthesis; lipid IV(A) from (3R)-3-hydroxytetradecanoyl-[acyl-carrier-protein] and UDP-N-acetyl-alpha-D-glucosamine: step 1/6. In terms of biological role, involved in the biosynthesis of lipid A, a phosphorylated glycolipid that anchors the lipopolysaccharide to the outer membrane of the cell. This is Acyl-[acyl-carrier-protein]--UDP-N-acetylglucosamine O-acyltransferase from Burkholderia vietnamiensis (strain G4 / LMG 22486) (Burkholderia cepacia (strain R1808)).